The following is a 517-amino-acid chain: Crotonobetaine/carnitine--CoA ligase (517 aa).

It belongs to the ATP-dependent AMP-binding enzyme family.

It catalyses the reaction 4-(trimethylamino)butanoate + ATP + CoA = 4-(trimethylamino)butanoyl-CoA + AMP + diphosphate. It carries out the reaction crotonobetaine + ATP + CoA = crotonobetainyl-CoA + AMP + diphosphate. The enzyme catalyses (R)-carnitine + ATP + CoA = (R)-carnitinyl-CoA + AMP + diphosphate. The protein operates within amine and polyamine metabolism; carnitine metabolism. Functionally, catalyzes the transfer of CoA to carnitine, generating the initial carnitinyl-CoA needed for the CaiB reaction cycle. Also has activity toward crotonobetaine and gamma-butyrobetaine. In Escherichia coli O8 (strain IAI1), this protein is Crotonobetaine/carnitine--CoA ligase.